Here is a 294-residue protein sequence, read N- to C-terminus: Phosphatidylserine decarboxylase proenzyme (294 aa).

Catalysis depends on charge relay system; for autoendoproteolytic cleavage activity residues aspartate 113, histidine 169, and serine 256. Residue serine 256 is the Schiff-base intermediate with substrate; via pyruvic acid; for decarboxylase activity of the active site. Serine 256 carries the pyruvic acid (Ser); by autocatalysis modification.

The protein belongs to the phosphatidylserine decarboxylase family. PSD-B subfamily. Prokaryotic type II sub-subfamily. Heterodimer of a large membrane-associated beta subunit and a small pyruvoyl-containing alpha subunit. Requires pyruvate as cofactor. Post-translationally, is synthesized initially as an inactive proenzyme. Formation of the active enzyme involves a self-maturation process in which the active site pyruvoyl group is generated from an internal serine residue via an autocatalytic post-translational modification. Two non-identical subunits are generated from the proenzyme in this reaction, and the pyruvate is formed at the N-terminus of the alpha chain, which is derived from the carboxyl end of the proenzyme. The autoendoproteolytic cleavage occurs by a canonical serine protease mechanism, in which the side chain hydroxyl group of the serine supplies its oxygen atom to form the C-terminus of the beta chain, while the remainder of the serine residue undergoes an oxidative deamination to produce ammonia and the pyruvoyl prosthetic group on the alpha chain. During this reaction, the Ser that is part of the protease active site of the proenzyme becomes the pyruvoyl prosthetic group, which constitutes an essential element of the active site of the mature decarboxylase.

The protein localises to the cell membrane. It catalyses the reaction a 1,2-diacyl-sn-glycero-3-phospho-L-serine + H(+) = a 1,2-diacyl-sn-glycero-3-phosphoethanolamine + CO2. It functions in the pathway phospholipid metabolism; phosphatidylethanolamine biosynthesis; phosphatidylethanolamine from CDP-diacylglycerol: step 2/2. In terms of biological role, catalyzes the formation of phosphatidylethanolamine (PtdEtn) from phosphatidylserine (PtdSer). The protein is Phosphatidylserine decarboxylase proenzyme of Clostridium perfringens (strain ATCC 13124 / DSM 756 / JCM 1290 / NCIMB 6125 / NCTC 8237 / Type A).